A 298-amino-acid chain; its full sequence is ATP synthase gamma chain (298 aa).

Belongs to the ATPase gamma chain family. F-type ATPases have 2 components, CF(1) - the catalytic core - and CF(0) - the membrane proton channel. CF(1) has five subunits: alpha(3), beta(3), gamma(1), delta(1), epsilon(1). CF(0) has three main subunits: a, b and c.

It localises to the cell inner membrane. Functionally, produces ATP from ADP in the presence of a proton gradient across the membrane. The gamma chain is believed to be important in regulating ATPase activity and the flow of protons through the CF(0) complex. The polypeptide is ATP synthase gamma chain (Francisella tularensis subsp. holarctica (strain FTNF002-00 / FTA)).